Here is a 432-residue protein sequence, read N- to C-terminus: Glutamate-1-semialdehyde 2,1-aminomutase (432 aa).

Lysine 272 is modified (N6-(pyridoxal phosphate)lysine).

This sequence belongs to the class-III pyridoxal-phosphate-dependent aminotransferase family. HemL subfamily. As to quaternary structure, homodimer. Pyridoxal 5'-phosphate is required as a cofactor.

Its subcellular location is the cytoplasm. The enzyme catalyses (S)-4-amino-5-oxopentanoate = 5-aminolevulinate. It functions in the pathway porphyrin-containing compound metabolism; protoporphyrin-IX biosynthesis; 5-aminolevulinate from L-glutamyl-tRNA(Glu): step 2/2. The protein operates within porphyrin-containing compound metabolism; chlorophyll biosynthesis. The chain is Glutamate-1-semialdehyde 2,1-aminomutase from Nostoc punctiforme (strain ATCC 29133 / PCC 73102).